A 503-amino-acid chain; its full sequence is Basic immunoglobulin-like variable motif-containing protein (503 aa).

Positions 1–26 are enriched in basic and acidic residues; it reads MPNVAETERSNDSGNGEHKSERKSPE. Disordered regions lie at residues 1–33, 152–184, and 438–469; these read MPNV…QGAV, TTNS…ECPQ, and ESQP…GRSF. Residues 155-172 are compositionally biased toward basic residues; sequence SKHKSGNAKKQVSKRKTS. The segment covering 173–184 has biased composition (basic and acidic residues); it reads DKKGRYQKECPQ.

Belongs to the BIVM family. As to expression, widely expressed. Expressed at higher level in spleen, ovary, small intestine, colon, peripheral blood leukocytes and liver. Also expressed in testis, ovary, aorta, appendix, trachea, pituitary gland, bladder, uterus, spinal cord, salivary gland, stomach, mammary gland and bone marrow. Weakly or not expressed in fetal spleen, adult thymus and certain cancer cell lines.

It localises to the cytoplasm. The protein localises to the nucleus. In Homo sapiens (Human), this protein is Basic immunoglobulin-like variable motif-containing protein (BIVM).